The sequence spans 236 residues: MSEAKNLFINGLWKNNSALVQLLGLCPLLAVSSTATNALGLGLATTLVLVLTNSAVSALRRWVPGEIRIPIYVMIIASVVSAVQMLINAYAFGLYQSLGIFIPLIVTNCIVIGRAEAYAAHHPVGMAALDGLATGLGATAALFVLGALREILGNGTLFDGADLLLGHWARALRIELFHTDTPFLLAILPPGAFLGLGFMLAFKYVIEQKRRQRQAQRSAVGQALRGAAPTDNHEQA.

The next 6 membrane-spanning stretches (helical) occupy residues 18 to 38 (ALVQLLGLCPLLAVSSTATNA), 39 to 59 (LGLGLATTLVLVLTNSAVSAL), 69 to 89 (IPIYVMIIASVVSAVQMLINA), 92 to 112 (FGLYQSLGIFIPLIVTNCIVI), 128 to 148 (ALDGLATGLGATAALFVLGAL), and 182 to 202 (PFLLAILPPGAFLGLGFMLAF). Residues 217–236 (RSAVGQALRGAAPTDNHEQA) form a disordered region.

The protein belongs to the NqrDE/RnfAE family. As to quaternary structure, the complex is composed of six subunits: RnfA, RnfB, RnfC, RnfD, RnfE and RnfG.

It is found in the cell inner membrane. Functionally, part of a membrane-bound complex that couples electron transfer with translocation of ions across the membrane. This chain is Ion-translocating oxidoreductase complex subunit E, found in Edwardsiella ictaluri (strain 93-146).